The chain runs to 21 residues: Fibrinogen beta chain (21 aa).

Positions 1-11 (EFPTDYDEGED) are enriched in acidic residues. The tract at residues 1 to 21 (EFPTDYDEGEDDRPKVGLGAR) is disordered. Tyr-6 carries the post-translational modification Sulfotyrosine.

As to quaternary structure, heterohexamer; disulfide linked. Contains 2 sets of 3 non-identical chains (alpha, beta and gamma). The 2 heterotrimers are in head to head conformation with the N-termini in a small central domain. Post-translationally, conversion of fibrinogen to fibrin is triggered by thrombin, which cleaves fibrinopeptides A and B from alpha and beta chains, and thus exposes the N-terminal polymerization sites responsible for the formation of the soft clot.

It localises to the secreted. In terms of biological role, cleaved by the protease thrombin to yield monomers which, together with fibrinogen alpha (FGA) and fibrinogen gamma (FGG), polymerize to form an insoluble fibrin matrix. Fibrin has a major function in hemostasis as one of the primary components of blood clots. In addition, functions during the early stages of wound repair to stabilize the lesion and guide cell migration during re-epithelialization. Was originally thought to be essential for platelet aggregation, based on in vitro studies using anticoagulated blood. However subsequent studies have shown that it is not absolutely required for thrombus formation in vivo. Enhances expression of SELP in activated platelets. Maternal fibrinogen is essential for successful pregnancy. Fibrin deposition is also associated with infection, where it protects against IFNG-mediated hemorrhage. May also facilitate the antibacterial immune response via both innate and T-cell mediated pathways. The sequence is that of Fibrinogen beta chain (FGB) from Bison bonasus (European bison).